A 705-amino-acid chain; its full sequence is Kinesin-like protein KIF2A (705 aa).

Residues 65–185 (DLVPDEDIEP…QQELREKRAQ (121 aa)) are disordered. S75 is modified (phosphoserine). T96 carries the post-translational modification Phosphothreonine. Residue S99 is modified to Phosphoserine. Position 101 is an N6-acetyllysine (K101). The span at 122 to 139 (LPEQSSSAQQNGSVSDIS) shows a compositional bias: polar residues. A phosphoserine mark is found at S134 and S139. Residues 153–186 (RRKSNCVKEVEKLQEKREKRRLQQQELREKRAQD) are a coiled coil. Residues 158 to 185 (CVKEVEKLQEKREKRRLQQQELREKRAQ) are compositionally biased toward basic and acidic residues. Positions 222–552 (RICVCVRKRP…LRYANRVKEL (331 aa)) constitute a Kinesin motor domain. 312 to 319 (GQTGSGKT) provides a ligand contact to ATP. At Q572 the chain carries Phosphoserine. Residues 659–698 (ATQLEAILEQKIDILTELRDKVKSFRAALQEEEQASKQIN) are a coiled coil.

This sequence belongs to the TRAFAC class myosin-kinesin ATPase superfamily. Kinesin family. MCAK/KIF2 subfamily. In terms of assembly, interacts with AURKA and PLK1. Interacts with PSRC1. Interacts with MCRS1; the interaction enhances recruitment of KIF2A to the minus ends of spindle microtubules which promotes chromosome alignment.

It localises to the cytoplasm. The protein localises to the cytoskeleton. It is found in the microtubule organizing center. The protein resides in the centrosome. Its subcellular location is the spindle pole. It localises to the spindle. Functionally, plus end-directed microtubule-dependent motor required for normal brain development. May regulate microtubule dynamics during axonal growth. Required for normal progression through mitosis. Required for normal congress of chromosomes at the metaphase plate. Required for normal spindle dynamics during mitosis. Promotes spindle turnover. Implicated in formation of bipolar mitotic spindles. Has microtubule depolymerization activity. This Rattus norvegicus (Rat) protein is Kinesin-like protein KIF2A.